The chain runs to 304 residues: Putative S-adenosyl-L-methionine-dependent methyltransferase MSMEG_1482/MSMEI_1446 (304 aa).

Residues aspartate 130 and 159–160 (DL) contribute to the S-adenosyl-L-methionine site.

Belongs to the UPF0677 family.

Functionally, exhibits S-adenosyl-L-methionine-dependent methyltransferase activity. In Mycolicibacterium smegmatis (strain ATCC 700084 / mc(2)155) (Mycobacterium smegmatis), this protein is Putative S-adenosyl-L-methionine-dependent methyltransferase MSMEG_1482/MSMEI_1446.